Here is a 168-residue protein sequence, read N- to C-terminus: Protein OPG162 (168 aa).

Residues 1-14 (MKSLNRQTVSMFKK) lie on the Intravirion side of the membrane. A helical transmembrane segment spans residues 15–37 (LSVPAAIMMILSTIISGIGTFLH). Residues 38 to 168 (YKEELMPSAC…SVLCVKKFYK (131 aa)) lie on the Virion surface side of the membrane. Positions 54–163 (YDKHCYLDTN…CKSTQSVLCV (110 aa)) constitute a C-type lectin domain. 2 disulfides stabilise this stretch: C75-C162 and C141-C154. N-linked (GlcNAc...) asparagine; by host glycosylation is present at N133.

Belongs to the orthopoxvirus OPG162 protein family. In terms of assembly, interacts with protein OPG161. Interacts with protein OPG164. Interacts with protein OPG190.

It is found in the virion membrane. It localises to the host Golgi apparatus. Forms a complex with OPG162 and OPG190 to coordinate the incorporation of OPG164 into wrapped enveloped virion (EV) membranes and, subsequently, the production of actin tails. Therefore plays an essential role in efficient cell-to-cell spread of viral particles. The sequence is that of Protein OPG162 (OPG162) from Homo sapiens (Human).